Here is a 63-residue protein sequence, read N- to C-terminus: Large ribosomal subunit protein uL29 (63 aa).

This sequence belongs to the universal ribosomal protein uL29 family.

This Bordetella pertussis (strain Tohama I / ATCC BAA-589 / NCTC 13251) protein is Large ribosomal subunit protein uL29.